Consider the following 147-residue polypeptide: Lipoprotein YafY (147 aa).

Residues 1–20 form the signal peptide; it reads MKRKTLPLLALVATTLFLIA. Residue Cys-21 is the site of N-palmitoyl cysteine attachment. The S-diacylglycerol cysteine moiety is linked to residue Cys-21.

It to E.coli YfjS.

It localises to the cell inner membrane. In terms of biological role, when overproduced strongly induces degP through the activation of the two-component envelope stress response system CpxA/CpxR. The polypeptide is Lipoprotein YafY (yafY) (Escherichia coli (strain K12)).